Here is a 291-residue protein sequence, read N- to C-terminus: Transmembrane O-methyltransferase (291 aa).

The chain crosses the membrane as a helical span at residues 31-51; it reads VGTMSPAIALAFLPLVVTLLV. S-adenosyl-L-methionine contacts are provided by residues Glu137, 139 to 140, Ser145, Glu163, and Ser193; that span reads GT.

The protein belongs to the class I-like SAM-binding methyltransferase superfamily. Cation-dependent O-methyltransferase family. Interacts with LHFPL5, PCDH15, TMC1, TMC2 and TMIE. Interacts directly with TMC1. The interaction of TOMT with TMC1 and TMC2 is required for the transportation of TMC1/2 into the stereocilia of hair cells.

The protein localises to the membrane. The protein resides in the cytoplasm. Its subcellular location is the endoplasmic reticulum. The enzyme catalyses a catechol + S-adenosyl-L-methionine = a guaiacol + S-adenosyl-L-homocysteine + H(+). Catalyzes the O-methylation, and thereby the inactivation, of catecholamine neurotransmitters and catechol hormones. Required for auditory function. Component of the cochlear hair cell's mechanotransduction (MET) machinery. Involved in the assembly of the asymmetric tip-link MET complex. Required for transportation of TMC1 and TMC2 proteins into the mechanically sensitive stereocilia of the hair cells. The function in MET is independent of the enzymatic activity. This chain is Transmembrane O-methyltransferase, found in Pan troglodytes (Chimpanzee).